The following is a 359-amino-acid chain: Molybdenum import ATP-binding protein ModC (359 aa).

An ABC transporter domain is found at 1–229 (MLELNFSQQL…SALRPWLQRE (229 aa)). 31 to 38 (GLSGAGKT) provides a ligand contact to ATP. The Mop domain maps to 289–354 (SSSIRNILPV…IKSVSFNRQN (66 aa)).

Belongs to the ABC transporter superfamily. Molybdate importer (TC 3.A.1.8) family. As to quaternary structure, the complex is composed of two ATP-binding proteins (ModC), two transmembrane proteins (ModB) and a solute-binding protein (ModA).

The protein resides in the cell inner membrane. It catalyses the reaction molybdate(out) + ATP + H2O = molybdate(in) + ADP + phosphate + H(+). Functionally, part of the ABC transporter complex ModABC involved in molybdenum import. Responsible for energy coupling to the transport system. The polypeptide is Molybdenum import ATP-binding protein ModC (Yersinia pestis bv. Antiqua (strain Antiqua)).